A 380-amino-acid polypeptide reads, in one-letter code: Cyclohexane-1-carbonyl-CoA dehydrogenase (380 aa).

This sequence belongs to the acyl-CoA dehydrogenase family. In terms of assembly, homotetramer. FAD is required as a cofactor.

The enzyme catalyses cyclohexane-1-carbonyl-CoA + oxidized [electron-transfer flavoprotein] + H(+) = cyclohex-1-ene-1-carbonyl-CoA + reduced [electron-transfer flavoprotein]. Its function is as follows. Acyl-CoA dehydrogenase involved in the anaerobic degradation of cyclohexane carboxylic acid (CHC). Catalyzes the 1,2-dehydrogenation of cyclohexane-1-carbonyl-CoA (CHCoA) to cyclohex-1-ene-1-carbonyl-CoA (CHeneCoA). An alternative substrate, cyclohex-3-ene-1-carboxyl-CoA can be converted to the corresponding cyclohexadiene-1-carboxyl-CoA isomers (30% rate compared to CHC). This chain is Cyclohexane-1-carbonyl-CoA dehydrogenase, found in Geobacter metallireducens (strain ATCC 53774 / DSM 7210 / GS-15).